The chain runs to 527 residues: Protein PLASTID TRANSCRIPTIONALLY ACTIVE 12, chloroplastic (527 aa).

A chloroplast-targeting transit peptide spans 1–30 (MASISTTTWLYRGQVCTDSGKSSNCIVQRR). The PHYA-interacting region 1 (PIR1) stretch occupies residues 1–115 (MASISTTTWL…ASIPGEDYWP (115 aa)). The disordered stretch occupies residues 89–188 (SYMDSTSGKL…NDSSDGFVTY (100 aa)). A compositionally biased stretch (acidic residues) spans 163–181 (TNDEVSDSEDSSEEEENDS). Short sequence motifs (nuclear localization signal) lie at residues 204–211 (DKKLGRPH) and 235–242 (WRKPEKEQ). Positions 252–352 (DVETVFLKAM…EMFSHQTDRE (101 aa)) are PHYA-interacting region 2 (PIR2). A compositionally biased stretch (acidic residues) spans 458–471 (GENDDDEDDADVEK). A disordered region spans residues 458–527 (GENDDDEDDA…LMDFEEETDP (70 aa)). Positions 485 to 504 (ETPELRTAKPKPKKEGRMSL) are enriched in basic and acidic residues. Over residues 506–527 (EAVDDAENLTDFLMDFEEETDP) the composition is skewed to acidic residues. Residues 512 to 520 (ENLTDFLMD) carry the Required and sufficient for transcriptional transactivation activity and to trigger PIF proteins degradation motif.

As to quaternary structure, component of the transcriptionally active chromosome (TAC) complexes. Interacts with PTAC14 and PTAC7. Binds directly to PTAC6/PAP8 in the nucleus. Interacts with MED14. Binds to SL1/MTERF3. Binds to photoactivated phytochromes (e.g. PHYA and PHYB) via their photosensory domains; these interactions stimulate its light-mediated accumulation. Associates, via its N-terminal region, with phytochrome-interacting factors (PIFs) including PIF1, PIF3, PIF4, PIF5, PIF6, BHLH72/PIF7, UNE10/PIF8 and PIL1. Binds to RAD4. Associates with MRL7/RCB. In terms of tissue distribution, mostly expressed in cotyledons, leaves, stems and flowers, but barely in roots.

The protein localises to the plastid. It is found in the chloroplast. The protein resides in the nucleus. Functionally, involved in plastid gene expression. Acidic transcriptional coactivator necessary for the transactivation of many PIFs target genes (class B genes), particularly during the regulation of hypocotyl growth. Plays dual opposite roles in regulating hypocotyl growth, preventing it in red and far-red conditions, but promoting it otherwise. Required in the nucleus for the initiation of photomorphogenesis mediated by phytochromes (PHYs) (e.g. PHYA and PHYB) by mediating PHYs localization to photobodies, especially in response to red and far-red light, and implicating phytochrome nuclear bodies as sites of proteolysis for PHYs and PIFs proteins (e.g. PIF1 and PIF3). Acts downstream of PHYs and upstream of DET1. Involved in UV tolerance in both roots and hypocotyls, specifically in dark conditions. Element of a PIF4/HMR/MED14-dependent thermoresponsive process; acts as a PIF4 transcriptional coactivator to trigger the thermoresponsive growth-relevant genes (e.g. mainly involved in biosynthesis and signaling of the phytohormone auxin) and promote warm-temperature-dependent (e.g. 27 degrees Celsius) PIF4 and MED14 stabilization and accumulation, being more prominently involved in long days (LD) and continuous red light (Rc) than in short days (SD), thus modulating warm temperature elicitation of MED14-dependent thermomorphogenesis (e.g. hypocotyl elongation). In Arabidopsis thaliana (Mouse-ear cress), this protein is Protein PLASTID TRANSCRIPTIONALLY ACTIVE 12, chloroplastic.